The following is a 184-amino-acid chain: DOMON domain-containing protein CBG21755 (184 aa).

Positions 1–20 (MIVPISLLFLFLSFVPFSYS) are cleaved as a signal peptide. Residues 28-145 (EVASMSWMVK…CVNWIVVPGG (118 aa)) form the DOMON domain. A glycan (N-linked (GlcNAc...) asparagine) is linked at Asn-49.

The protein resides in the secreted. The polypeptide is DOMON domain-containing protein CBG21755 (Caenorhabditis briggsae).